A 463-amino-acid chain; its full sequence is Sodium-coupled neutral amino acid transporter 7 (463 aa).

Ser28 bears the Phosphoserine mark. 11 helical membrane-spanning segments follow: residues 56–76, 82–102, 130–150, 179–199, 206–226, 240–260, 283–303, 320–340, 372–392, 396–416, and 429–449; these read AVFI…PAAF, VAAG…GLVI, LCEI…LIII, FTIS…KEIG, SLSV…YIWP, ASWM…QCHV, AAMV…FLTF, VAVA…YPIL, VLQT…IPDI, ISVI…LCLI, and ASWW…AFIF.

Belongs to the amino acid/polyamine transporter 2 family. Interacts with the mTORC1 complex; this interaction mediates the recruitment of mTORC1 to the lysosome and its subsequent activation.

The protein localises to the lysosome membrane. It is found in the cell projection. It localises to the axon. The catalysed reaction is L-asparagine(in) + Na(+)(in) = L-asparagine(out) + Na(+)(out). It carries out the reaction L-glutamine(in) + Na(+)(in) = L-glutamine(out) + Na(+)(out). Functionally, symporter that selectively cotransports sodium ions and amino acids, such as L-glutamine and L-asparagine from the lysosome into the cytoplasm and may participates in mTORC1 activation. The transport activity requires an acidic lysosomal lumen. The sequence is that of Sodium-coupled neutral amino acid transporter 7 from Rattus norvegicus (Rat).